The primary structure comprises 215 residues: Probable phosphoglycerate mutase GpmB (215 aa).

Substrate-binding positions include 8-15, 21-22, Arg-58, Arg-60, 82-85, and 151-152; these read RHGETEWN, QG, ELHM, and GI. The active-site Tele-phosphohistidine intermediate is the His-9. The active-site Proton donor/acceptor is the Glu-82.

It belongs to the phosphoglycerate mutase family. GpmB subfamily.

It catalyses the reaction (2R)-2-phosphoglycerate = (2R)-3-phosphoglycerate. It participates in carbohydrate degradation; glycolysis; pyruvate from D-glyceraldehyde 3-phosphate: step 3/5. This is Probable phosphoglycerate mutase GpmB from Serratia proteamaculans (strain 568).